Consider the following 228-residue polypeptide: Sugar fermentation stimulation protein homolog (228 aa).

Belongs to the SfsA family.

In Desulfitobacterium hafniense (strain Y51), this protein is Sugar fermentation stimulation protein homolog.